The following is a 29-amino-acid chain: Phospholemman-like protein (29 aa).

Belongs to the FXYD family. Phosphorylated by protein kinase C.

It is found in the membrane. Functionally, induces a hyperpolarization-activated chloride current when expressed in Xenopus oocytes. This Scyliorhinus canicula (Small-spotted catshark) protein is Phospholemman-like protein.